The sequence spans 276 residues: Glutamate 5-kinase (276 aa).

Residue Lys14 coordinates ATP. The substrate site is built by Ser54, Asp141, and Asn157. Residues 177 to 178 (SD) and 219 to 225 (TGGMLTK) contribute to the ATP site.

It belongs to the glutamate 5-kinase family.

The protein localises to the cytoplasm. The catalysed reaction is L-glutamate + ATP = L-glutamyl 5-phosphate + ADP. It functions in the pathway amino-acid biosynthesis; L-proline biosynthesis; L-glutamate 5-semialdehyde from L-glutamate: step 1/2. Functionally, catalyzes the transfer of a phosphate group to glutamate to form L-glutamate 5-phosphate. The chain is Glutamate 5-kinase from Listeria monocytogenes serotype 4b (strain CLIP80459).